The primary structure comprises 258 residues: MKEILITNDDGFEATGLLALKEALSELDGVNVTIVAPSSEKSACAHSLTLTRPLRFIKLDDNFFKLDDATPSDCVYLALHALYNKKPDLVISGINHGANLGEDITYSGTCGAAMEGVLQGIRSIAFSQFYENNSLNELGFELAKEVVKFITPKVLNDEISLNPREFLNVNIPATTSKNFKGYAVVPAGRRTYATHATLNRNPRGIEYYWLGNAALEYEKGEPSDISKVNEGFATITPIKLNMTSYESLESLKGKFDAK.

Residues aspartate 9, aspartate 10, serine 42, and asparagine 95 each contribute to the a divalent metal cation site.

Belongs to the SurE nucleotidase family. The cofactor is a divalent metal cation.

The protein localises to the cytoplasm. The catalysed reaction is a ribonucleoside 5'-phosphate + H2O = a ribonucleoside + phosphate. Nucleotidase that shows phosphatase activity on nucleoside 5'-monophosphates. The sequence is that of 5'-nucleotidase SurE from Campylobacter concisus (strain 13826).